Here is a 550-residue protein sequence, read N- to C-terminus: Arginine--tRNA ligase (550 aa).

Positions 130-140 (ANPTGPIHIGG) match the 'HIGH' region motif.

It belongs to the class-I aminoacyl-tRNA synthetase family. In terms of assembly, monomer.

It is found in the cytoplasm. The catalysed reaction is tRNA(Arg) + L-arginine + ATP = L-arginyl-tRNA(Arg) + AMP + diphosphate. The protein is Arginine--tRNA ligase (argS) of Mycobacterium tuberculosis (strain CDC 1551 / Oshkosh).